Reading from the N-terminus, the 142-residue chain is Putative pterin-4-alpha-carbinolamine dehydratase (142 aa).

The protein belongs to the pterin-4-alpha-carbinolamine dehydratase family.

The catalysed reaction is (4aS,6R)-4a-hydroxy-L-erythro-5,6,7,8-tetrahydrobiopterin = (6R)-L-erythro-6,7-dihydrobiopterin + H2O. This is Putative pterin-4-alpha-carbinolamine dehydratase (pcbd-1) from Caenorhabditis elegans.